A 421-amino-acid chain; its full sequence is Methionine aminopeptidase 2 (421 aa).

Positions 1-53 (MTDAEIENSPASDLKELNLENEGVEQQDQAKADESDPVESKKKKNKKKKKKKS) are disordered. Residues 28–40 (DQAKADESDPVES) are compositionally biased toward basic and acidic residues. The residue at position 35 (serine 35) is a Phosphoserine. Positions 41-53 (KKKKNKKKKKKKS) are enriched in basic residues. Substrate is bound at residue histidine 174. Positions 194, 205, and 274 each coordinate a divalent metal cation. Histidine 282 lines the substrate pocket. A divalent metal cation-binding residues include glutamate 307 and glutamate 402.

Belongs to the peptidase M24A family. Methionine aminopeptidase eukaryotic type 2 subfamily. Requires Co(2+) as cofactor. Zn(2+) serves as cofactor. The cofactor is Mn(2+). It depends on Fe(2+) as a cofactor.

It localises to the cytoplasm. It catalyses the reaction Release of N-terminal amino acids, preferentially methionine, from peptides and arylamides.. In terms of biological role, cotranslationally removes the N-terminal methionine from nascent proteins. The N-terminal methionine is often cleaved when the second residue in the primary sequence is small and uncharged (Met-Ala-, Cys, Gly, Pro, Ser, Thr, or Val). This chain is Methionine aminopeptidase 2, found in Saccharomyces cerevisiae (strain RM11-1a) (Baker's yeast).